The sequence spans 262 residues: Indole-3-glycerol phosphate synthase (262 aa).

Belongs to the TrpC family.

It catalyses the reaction 1-(2-carboxyphenylamino)-1-deoxy-D-ribulose 5-phosphate + H(+) = (1S,2R)-1-C-(indol-3-yl)glycerol 3-phosphate + CO2 + H2O. It functions in the pathway amino-acid biosynthesis; L-tryptophan biosynthesis; L-tryptophan from chorismate: step 4/5. This chain is Indole-3-glycerol phosphate synthase, found in Clostridium acetobutylicum (strain ATCC 824 / DSM 792 / JCM 1419 / IAM 19013 / LMG 5710 / NBRC 13948 / NRRL B-527 / VKM B-1787 / 2291 / W).